The chain runs to 499 residues: Guanosine-5'-triphosphate,3'-diphosphate pyrophosphatase (499 aa).

The protein belongs to the GppA/Ppx family. GppA subfamily.

The enzyme catalyses guanosine 3'-diphosphate 5'-triphosphate + H2O = guanosine 3',5'-bis(diphosphate) + phosphate + H(+). Its pathway is purine metabolism; ppGpp biosynthesis; ppGpp from GTP: step 2/2. In terms of biological role, catalyzes the conversion of pppGpp to ppGpp. Guanosine pentaphosphate (pppGpp) is a cytoplasmic signaling molecule which together with ppGpp controls the 'stringent response', an adaptive process that allows bacteria to respond to amino acid starvation, resulting in the coordinated regulation of numerous cellular activities. The protein is Guanosine-5'-triphosphate,3'-diphosphate pyrophosphatase of Klebsiella pneumoniae (strain 342).